The primary structure comprises 668 residues: UvrABC system protein B (668 aa).

In terms of domain architecture, Helicase ATP-binding spans 31–416; sequence QGITDGVPAQ…RGHIIEQIIR (386 aa). 44–51 is a binding site for ATP; it reads GTTGSGKT. The Beta-hairpin signature appears at 97 to 120; the sequence is YYDYYQPEAYIARSDTYIEKSLLI. A Helicase C-terminal domain is found at 433–596; the sequence is QIDDLLEEIR…ITPQPIIKPI (164 aa). A UVR domain is found at 621–656; it reads EASIKTYEEAMYQAAQEFQFDEAVKYRDLMNAAKKQ.

This sequence belongs to the UvrB family. As to quaternary structure, forms a heterotetramer with UvrA during the search for lesions. Interacts with UvrC in an incision complex.

Its subcellular location is the cytoplasm. In terms of biological role, the UvrABC repair system catalyzes the recognition and processing of DNA lesions. A damage recognition complex composed of 2 UvrA and 2 UvrB subunits scans DNA for abnormalities. Upon binding of the UvrA(2)B(2) complex to a putative damaged site, the DNA wraps around one UvrB monomer. DNA wrap is dependent on ATP binding by UvrB and probably causes local melting of the DNA helix, facilitating insertion of UvrB beta-hairpin between the DNA strands. Then UvrB probes one DNA strand for the presence of a lesion. If a lesion is found the UvrA subunits dissociate and the UvrB-DNA preincision complex is formed. This complex is subsequently bound by UvrC and the second UvrB is released. If no lesion is found, the DNA wraps around the other UvrB subunit that will check the other stand for damage. The sequence is that of UvrABC system protein B from Chlamydia trachomatis serovar A (strain ATCC VR-571B / DSM 19440 / HAR-13).